The sequence spans 693 residues: Glycine--tRNA ligase beta subunit (693 aa).

This sequence belongs to the class-II aminoacyl-tRNA synthetase family. As to quaternary structure, tetramer of two alpha and two beta subunits.

Its subcellular location is the cytoplasm. The enzyme catalyses tRNA(Gly) + glycine + ATP = glycyl-tRNA(Gly) + AMP + diphosphate. This chain is Glycine--tRNA ligase beta subunit, found in Shouchella clausii (strain KSM-K16) (Alkalihalobacillus clausii).